The primary structure comprises 231 residues: MAHSKHGLKEEMTMKYHMEGCVNGHKFVITGEGIGYPFKGKQTINLCVIEGGPLPFSEDILSAGFKYGDRIFTEYPQDIVDYFKNSCPAGYTWGRSFLFEDGAVCICNVDITVSVKENCIYHKSIFNGMNFPADGPVMKKMTTNWEASCEKIMPVPKQGILKGDVSMYLLLKDGGRYRCQFDTVYKAKSVPSKMPEWHFIQHKLLREDRSDAKNQKWQLTEHAIAFPSALA.

Phe-65 carries the phenylalanine amide; atypical modification. The segment at residues 66–68 (KYG) is a cross-link (2-tetrahydro-2-pyridyl-5-imidazolinone (Lys-Gly)). Tyr-67 is subject to 2,3-didehydrotyrosine.

The protein belongs to the GFP family. Homotetramer. Post-translationally, contains a chromophore consisting of modified amino acid residues. The chromophore is formed by autocatalytic backbone condensation between Xaa-N and Gly-(N+2), and oxidation of Tyr-(N+1) to didehydrotyrosine. In addition, the residue N lysine undergoes cyclization. The alpha-amino nitrogen is replaced by the epsilon-amino nitrogen, the peptide chain is broken, residue N-1 is released as an amide, and a double bond is formed between the alpha-carbon and the nitrogen so that a tetrahydropyridine ring results. Maturation of the chromophore requires nothing other than molecular oxygen. Tentacle and oral disk.

Pigment protein that is yellow in color. In Zoanthus sp. (Green polyp), this protein is GFP-like fluorescent chromoprotein FP538.